The sequence spans 423 residues: Adenylosuccinate synthetase (423 aa).

Residues 12-18 (GDEGKGK) and 40-42 (GHT) contribute to the GTP site. Catalysis depends on Asp-13, which acts as the Proton acceptor. Asp-13 and Gly-40 together coordinate Mg(2+). Residues 13–16 (DEGK), 38–41 (NAGH), Thr-129, Arg-143, Gln-224, Thr-239, and Arg-303 contribute to the IMP site. Residue His-41 is the Proton donor of the active site. 299-305 (SVTGRQR) lines the substrate pocket. GTP is bound by residues Arg-305, 331-333 (KGD), and 412-414 (SVG).

The protein belongs to the adenylosuccinate synthetase family. As to quaternary structure, homodimer. Requires Mg(2+) as cofactor.

Its subcellular location is the cytoplasm. The catalysed reaction is IMP + L-aspartate + GTP = N(6)-(1,2-dicarboxyethyl)-AMP + GDP + phosphate + 2 H(+). It functions in the pathway purine metabolism; AMP biosynthesis via de novo pathway; AMP from IMP: step 1/2. Functionally, plays an important role in the de novo pathway of purine nucleotide biosynthesis. Catalyzes the first committed step in the biosynthesis of AMP from IMP. The polypeptide is Adenylosuccinate synthetase (Flavobacterium psychrophilum (strain ATCC 49511 / DSM 21280 / CIP 103535 / JIP02/86)).